Reading from the N-terminus, the 256-residue chain is Enoyl-[acyl-carrier-protein] reductase [NADPH] FabI (256 aa).

NADP(+) is bound by residues Gly-13, 19-20 (SI), 40-44 (RKERS), 66-67 (DV), and Ile-94. Position 97 (Ala-97) interacts with substrate. Active-site proton acceptor residues include Tyr-147 and Tyr-157. NADP(+)-binding positions include Lys-164 and 193 to 197 (IRTLS).

Belongs to the short-chain dehydrogenases/reductases (SDR) family. FabI subfamily. Homotetramer.

It carries out the reaction a 2,3-saturated acyl-[ACP] + NADP(+) = a (2E)-enoyl-[ACP] + NADPH + H(+). It functions in the pathway lipid metabolism; fatty acid biosynthesis. Its activity is regulated as follows. Inhibited by 1,4-disubstituted imidazoles, 1,4-benzodiazepine, naphthyridinone derivatives, triclosan and its diphenyl ether analgues. Functionally, catalyzes the reduction of a carbon-carbon double bond in an enoyl moiety that is covalently linked to an acyl carrier protein (ACP). It has a preference for a long chain (C12) substrate compared to the shorter (C4) acyl group. Involved in the elongation cycle of fatty acid which are used in the lipid metabolism. The protein is Enoyl-[acyl-carrier-protein] reductase [NADPH] FabI (fabI) of Staphylococcus aureus (strain NCTC 8325 / PS 47).